The following is a 145-amino-acid chain: MALRLLLGFDYGTKQIGVAVGQVITGQARELCTLKAQNGVPDWNQVEALIKEWKPDAVVVGLPLNMDGTPSDMCLRAEKFARRLNGRYNLPFYTHDERLTTFEAKGERLVRGGQKGSYRDNPVDAIAAALLLQGWLDANAALFET.

This sequence belongs to the YqgF nuclease family.

It is found in the cytoplasm. In terms of biological role, could be a nuclease involved in processing of the 5'-end of pre-16S rRNA. The sequence is that of Putative pre-16S rRNA nuclease from Pseudomonas fluorescens.